Reading from the N-terminus, the 124-residue chain is Ribonuclease pancreatic (124 aa).

A compositionally biased stretch (basic and acidic residues) spans 1–13 (KETAAAKFERQHM). A disordered region spans residues 1–25 (KETAAAKFERQHMDSSTSSASSSNY). Residues K7 and R10 each contribute to the substrate site. The Proton acceptor role is filled by H12. 4 cysteine pairs are disulfide-bonded: C26-C84, C40-C95, C58-C110, and C65-C72. Residues 41 to 45 (KPVNT), K66, and R85 each bind substrate. The active-site Proton donor is H119.

It belongs to the pancreatic ribonuclease family. As to quaternary structure, monomer. Interacts with and forms tight 1:1 complexes with RNH1. Dimerization of two such complexes may occur. Interaction with RNH1 inhibits this protein. As to expression, pancreas.

It localises to the secreted. The catalysed reaction is an [RNA] containing cytidine + H2O = an [RNA]-3'-cytidine-3'-phosphate + a 5'-hydroxy-ribonucleotide-3'-[RNA].. It carries out the reaction an [RNA] containing uridine + H2O = an [RNA]-3'-uridine-3'-phosphate + a 5'-hydroxy-ribonucleotide-3'-[RNA].. Functionally, endonuclease that catalyzes the cleavage of RNA on the 3' side of pyrimidine nucleotides. Acts on single-stranded and double-stranded RNA. This chain is Ribonuclease pancreatic (RNASE1), found in Tragelaphus oryx (Eland).